The sequence spans 260 residues: OCIA domain-containing protein 1 (260 aa).

One can recognise an OCIA domain in the interval 1-110 (MDSPLSDGSR…MRLPNSRLGE (110 aa)). The disordered stretch occupies residues 146-260 (DVYTDEGLNP…KNKYGDSWQD (115 aa)). Positions 155–164 (PSRSTALNLD) are enriched in polar residues. The span at 205-215 (EDLRKKNREGY) shows a compositional bias: basic and acidic residues.

It belongs to the OCIAD1 family.

The sequence is that of OCIA domain-containing protein 1 from Drosophila pseudoobscura pseudoobscura (Fruit fly).